Reading from the N-terminus, the 349-residue chain is ATPase GET3 (349 aa).

Position 26–33 (26–33 (KGGVGKTT)) interacts with ATP. Aspartate 57 is an active-site residue. ATP-binding residues include glutamate 240 and asparagine 267. Cysteine 280 and cysteine 283 together coordinate Zn(2+).

This sequence belongs to the arsA ATPase family. As to quaternary structure, homodimer. Component of the Golgi to ER traffic (GET) complex, which is composed of GET1, GET2 and GET3. Within the complex, GET1 and GET2 form a heterotetramer which is stabilized by phosphatidylinositol binding and which binds to the GET3 homodimer. Interacts with the chloride channel protein GEF1.

It is found in the cytoplasm. The protein localises to the endoplasmic reticulum. It localises to the golgi apparatus. ATPase required for the post-translational delivery of tail-anchored (TA) proteins to the endoplasmic reticulum. Recognizes and selectively binds the transmembrane domain of TA proteins in the cytosol. This complex then targets to the endoplasmic reticulum by membrane-bound receptors GET1 and GET2, where the tail-anchored protein is released for insertion. This process is regulated by ATP binding and hydrolysis. ATP binding drives the homodimer towards the closed dimer state, facilitating recognition of newly synthesized TA membrane proteins. ATP hydrolysis is required for insertion. Subsequently, the homodimer reverts towards the open dimer state, lowering its affinity for the GET1-GET2 receptor, and returning it to the cytosol to initiate a new round of targeting. Cooperates with the HDEL receptor ERD2 to mediate the ATP-dependent retrieval of resident ER proteins that contain a C-terminal H-D-E-L retention signal from the Golgi to the ER. Involved in low-level resistance to the oxyanions arsenite and arsenate, and in heat tolerance. The chain is ATPase GET3 from Kluyveromyces lactis (strain ATCC 8585 / CBS 2359 / DSM 70799 / NBRC 1267 / NRRL Y-1140 / WM37) (Yeast).